Reading from the N-terminus, the 419-residue chain is Cyclin-B2-2 (419 aa).

The interval glutamine 79–aspartate 116 is disordered.

It belongs to the cyclin family. Cyclin AB subfamily. In terms of assembly, interacts with CDKB2-1. As to expression, expressed in the intercalary meristem and the elongation zone of internodes. Expressed in adventitious roots at all nodes under submergence conditions.

The protein localises to the nucleus. Functionally, involved in the control of the cell cycle at the G2/M (mitosis) transition. May associate to CDKB2-1 and activate CDKB2-1 kinase to promote cell division. This is Cyclin-B2-2 (CYCB2-2) from Oryza sativa subsp. indica (Rice).